Here is a 134-residue protein sequence, read N- to C-terminus: MPPKGRQGAAKKVRRKEKKNVAHGHAHIKSTFNNTIVSITDPTGNVISWASAGHVGFKGSRKSTPFAAQMAAESAARRAQEHGMRKVDVFVKGPGSGRETAIRSLQATGLEVGSIQDVTPTPHNGCRPPKRRRV.

Disordered regions lie at residues 1 to 22 and 114 to 134; these read MPPK…KNVA and SIQD…RRRV. Basic residues predominate over residues 9-22; that stretch reads AAKKVRRKEKKNVA.

This sequence belongs to the universal ribosomal protein uS11 family. As to quaternary structure, part of the 30S ribosomal subunit. Interacts with proteins S7 and S18. Binds to IF-3.

Located on the platform of the 30S subunit, it bridges several disparate RNA helices of the 16S rRNA. Forms part of the Shine-Dalgarno cleft in the 70S ribosome. The chain is Small ribosomal subunit protein uS11 from Streptomyces coelicolor (strain ATCC BAA-471 / A3(2) / M145).